A 123-amino-acid polypeptide reads, in one-letter code: MGSCGGKHTGKGAPKPYSRNFTDPWRKTPGRLFGTALIRFYQITLSSLIGNSCRHLPTCSEYAYEAIARHGLWRGGWMGFFRVVRCGPFGTHGFDPVPRELSPDLKWYMPWRYWRCSASRTGK.

Positions 1–23 are disordered; the sequence is MGSCGGKHTGKGAPKPYSRNFTD.

It belongs to the UPF0161 family.

Its subcellular location is the cell inner membrane. Its function is as follows. Could be involved in insertion of integral membrane proteins into the membrane. The sequence is that of Putative membrane protein insertion efficiency factor from Brucella ovis (strain ATCC 25840 / 63/290 / NCTC 10512).